The primary structure comprises 624 residues: Translocator protein BipB (624 aa).

The tract at residues 54 to 99 is disordered; that stretch reads LASEQCDAQPVTDDARLDRLDDKPALRAPRSDAAHAADGNARGNGG. Over residues 66-88 the composition is skewed to basic and acidic residues; it reads DDARLDRLDDKPALRAPRSDAAH. The stretch at 313 to 343 forms a coiled coil; sequence EMQAKREAELQKKSDEYQEQVKKAEEMQKTM. 3 helical membrane-spanning segments follow: residues 359–379, 405–425, and 434–454; these read FAAAAFTGGASLALAAVGLAL, AILKPLMEVISSLITKALVAC, and LAGAILGAVVTGVALVAAAFV.

Belongs to the SctE/SipB/YopB family.

The protein resides in the secreted. Its subcellular location is the host membrane. Functionally, plays a role in the bacterium-induced formation of multinucleated giant cell (MNGC), which is formed after host cell fusion, as well as in the intercellular spreading of bacteria and in the induction of apoptosis in macrophages. May act in concert with other effector proteins to induce fusion of host cell membranes. The sequence is that of Translocator protein BipB (bipB) from Burkholderia thailandensis (strain ATCC 700388 / DSM 13276 / CCUG 48851 / CIP 106301 / E264).